The following is a 322-amino-acid chain: AB hydrolase superfamily protein FGSG_00044 (322 aa).

In terms of domain architecture, AB hydrolase-1 spans 36–319; sequence RTTPKQPVAI…ITAEVRRIVK (284 aa).

Belongs to the AB hydrolase superfamily.

It functions in the pathway mycotoxin biosynthesis. Its function is as follows. AB hydrolase superfamily protein; part of the gene cluster that mediates the biosynthesis of gramillins A and B, bicyclic lipopeptides that induce cell death in maize leaves but not in wheat leaves. The nonribosomal peptide synthetase GRA1 incorporates respectively a glutamic adic (Glu), a leucine (Leu), a serine (Ser), a hydroxyglutamine (HOGln), a 2-amino decanoic acid, and 2 cysteins (CysB and CysA). The biosynthesis of 2-amino decanoic acid incorporated in gramillins could be initiated by a fatty acid synthase composed of the alpha and beta subunits FGSG_00036 and FGSG_11656. The cytochrome P450 monooxygenase FGSG_15680 could hydroxylate the fatty acid chain. Subsequent oxidation to the ketone by the oxidoreductase FGSG_00048 and transamination by aminotransferase FGSG_00049 could form 2-amino-decanoic acid. On the other hand, FGSG_15680 could also be responsible for the HO-modified glutamine at the gamma-position. Whether hydroxylation occurs on the fully assembled product or on the Gln residue prior to assembly into the gramillins requires further proof. The thioredoxin FGSG_00043 could also be required for the disulfide-bond formation between CysA and CysB. The specific involvement of the remaining proteins from the cluster is more difficult to discern, but could have broader regulatory (FGSG_00040 and FGSG_11657) or enzymatic functions (FGSG_00044 and FGSG_00045). The final C-domain of GRA1 does not possess the expected sequence of a termination CT domain, often implicated in macrocyclization and release of a cyclopeptidein fungal NRPs; and the thioesterase FGSG_00047 may act in concert with the terminal C-domain of GRA1 to catalyze the formation of the macrocyclic anhydride and release of the products. The protein is AB hydrolase superfamily protein FGSG_00044 of Gibberella zeae (strain ATCC MYA-4620 / CBS 123657 / FGSC 9075 / NRRL 31084 / PH-1) (Wheat head blight fungus).